The chain runs to 550 residues: Alkaline phosphatase PhoV (550 aa).

The first 20 residues, 1–20, serve as a signal peptide directing secretion; sequence MKIKLLCISLAVLFCSSANA. D48 and T89 together coordinate Zn(2+). T89 (phosphothreonine intermediate) is an active-site residue. Residues N110 and 171–173 contribute to the substrate site; that span reads KDR. 5 residues coordinate Zn(2+): D313, H317, D360, H361, and H491.

It depends on Zn(2+) as a cofactor.

Its subcellular location is the cell inner membrane. It carries out the reaction a phosphate monoester + H2O = an alcohol + phosphate. Subject to competitive inhibition by phosphate. Inhibited by manganese. Magnesium mildly increases enzyme activity when the zinc concentration is suboptimal. Optimal activity is dependent on the presence of 0.01-2% Triton X-100. Triton X-100 at a concentration of 0.05% increases the activity about fivefold relative to that in its absence. The enzyme is even active in Triton X-100 concentrations up to 80%. 50% inhibition by 4 mM EDTA and 50% inhibition by 48 mM sodium citrate. Functionally, alkaline phosphatase with broad substrate specificity. This is Alkaline phosphatase PhoV from Synechococcus elongatus (strain ATCC 33912 / PCC 7942 / FACHB-805) (Anacystis nidulans R2).